We begin with the raw amino-acid sequence, 576 residues long: Lysine--tRNA ligase (576 aa).

E412 and E419 together coordinate Mg(2+).

Belongs to the class-II aminoacyl-tRNA synthetase family. Homodimer. It depends on Mg(2+) as a cofactor.

The protein resides in the cytoplasm. The catalysed reaction is tRNA(Lys) + L-lysine + ATP = L-lysyl-tRNA(Lys) + AMP + diphosphate. This is Lysine--tRNA ligase from Phocaeicola vulgatus (strain ATCC 8482 / DSM 1447 / JCM 5826 / CCUG 4940 / NBRC 14291 / NCTC 11154) (Bacteroides vulgatus).